We begin with the raw amino-acid sequence, 413 residues long: uncharacterized protein (413 aa).

This is an uncharacterized protein from Mycobacterium tuberculosis (strain ATCC 25618 / H37Rv).